The sequence spans 149 residues: FAD synthase (149 aa).

ATP-binding positions include 15-16, 20-23, and D101; these read VF and HVGH.

Belongs to the archaeal FAD synthase family. In terms of assembly, homodimer. A divalent metal cation is required as a cofactor.

It catalyses the reaction FMN + ATP + H(+) = FAD + diphosphate. It functions in the pathway cofactor biosynthesis; FAD biosynthesis; FAD from FMN: step 1/1. Catalyzes the transfer of the AMP portion of ATP to flavin mononucleotide (FMN) to produce flavin adenine dinucleotide (FAD) coenzyme. The polypeptide is FAD synthase (Thermococcus kodakarensis (strain ATCC BAA-918 / JCM 12380 / KOD1) (Pyrococcus kodakaraensis (strain KOD1))).